A 156-amino-acid polypeptide reads, in one-letter code: ATP synthase subunit b (156 aa).

The helical transmembrane segment at L7–P27 threads the bilayer.

This sequence belongs to the ATPase B chain family. In terms of assembly, F-type ATPases have 2 components, F(1) - the catalytic core - and F(0) - the membrane proton channel. F(1) has five subunits: alpha(3), beta(3), gamma(1), delta(1), epsilon(1). F(0) has three main subunits: a(1), b(2) and c(10-14). The alpha and beta chains form an alternating ring which encloses part of the gamma chain. F(1) is attached to F(0) by a central stalk formed by the gamma and epsilon chains, while a peripheral stalk is formed by the delta and b chains.

It is found in the cell inner membrane. F(1)F(0) ATP synthase produces ATP from ADP in the presence of a proton or sodium gradient. F-type ATPases consist of two structural domains, F(1) containing the extramembraneous catalytic core and F(0) containing the membrane proton channel, linked together by a central stalk and a peripheral stalk. During catalysis, ATP synthesis in the catalytic domain of F(1) is coupled via a rotary mechanism of the central stalk subunits to proton translocation. Its function is as follows. Component of the F(0) channel, it forms part of the peripheral stalk, linking F(1) to F(0). The sequence is that of ATP synthase subunit b from Verminephrobacter eiseniae (strain EF01-2).